Here is a 142-residue protein sequence, read N- to C-terminus: Transcriptional regulator MraZ (142 aa).

SpoVT-AbrB domains are found at residues Ala5 to Glu51 and Ala77 to Thr120.

The protein belongs to the MraZ family. In terms of assembly, forms oligomers.

It is found in the cytoplasm. The protein resides in the nucleoid. This chain is Transcriptional regulator MraZ, found in Cupriavidus taiwanensis (strain DSM 17343 / BCRC 17206 / CCUG 44338 / CIP 107171 / LMG 19424 / R1) (Ralstonia taiwanensis (strain LMG 19424)).